The chain runs to 398 residues: Beta-1,6-galactosyltransferase GALT29A (398 aa).

The Cytoplasmic portion of the chain corresponds to Met1–Arg6. Residues Pro7–Ile27 form a helical; Signal-anchor for type II membrane protein membrane-spanning segment. Topologically, residues Arg28–His398 are lumenal. 2 N-linked (GlcNAc...) asparagine glycosylation sites follow: Asn221 and Asn346.

The protein belongs to the glycosyltransferase 29 family. As to quaternary structure, interacts with GALT31A.

The protein localises to the golgi apparatus membrane. In terms of biological role, galactosyltransferase involved in the biosynthesis of type II arabinogalactan. Possesses galactosyltransferase (GalT) activity in vitro, transferring galactose from UDP-galactose to a mixture of various oligosaccharides derived from arabinogalactan proteins. Forms a complex with GALT31A that can work cooperatively to enhance the activities of adding galactose residues at O6 positions to beta-1,6-galactan and beta-1,3-galactan. The polypeptide is Beta-1,6-galactosyltransferase GALT29A (Arabidopsis thaliana (Mouse-ear cress)).